A 173-amino-acid polypeptide reads, in one-letter code: Galactose-6-phosphate isomerase subunit LacB (173 aa).

It belongs to the LacAB/RpiB family. In terms of assembly, heteromultimeric protein consisting of LacA and LacB.

The enzyme catalyses aldehydo-D-galactose 6-phosphate = keto-D-tagatose 6-phosphate. Its pathway is carbohydrate metabolism; D-galactose 6-phosphate degradation; D-tagatose 6-phosphate from D-galactose 6-phosphate: step 1/1. In Clostridium acetobutylicum (strain ATCC 824 / DSM 792 / JCM 1419 / IAM 19013 / LMG 5710 / NBRC 13948 / NRRL B-527 / VKM B-1787 / 2291 / W), this protein is Galactose-6-phosphate isomerase subunit LacB.